Consider the following 529-residue polypeptide: AT hook-containing protein attf-4 (529 aa).

Disordered stretches follow at residues 1 to 39 (MLQP…MEDD), 131 to 158 (QVVH…KPIE), 173 to 200 (GGGG…FPPP), and 233 to 255 (VSAN…DHLE). Polar residues-rich tracts occupy residues 19–31 (SVST…SPSN) and 138–153 (QNGS…TSEN). The segment covering 179 to 189 (IHTERLSEPAR) has biased composition (basic and acidic residues). Residues 233–248 (VSANTSTASPGPSSEG) show a composition bias toward low complexity. A DNA-binding region (a.T hook) is located at residues 307 to 319 (GRGRGRPKLIGDE). The tract at residues 436-476 (LEGGSPPASSSSTATTSTATKTVKQESKNGHQNEENLNVKQ) is disordered. The segment covering 443–455 (ASSSSTATTSTAT) has biased composition (low complexity). Residues 458-469 (VKQESKNGHQNE) show a composition bias toward basic and acidic residues.

This Caenorhabditis elegans protein is AT hook-containing protein attf-4.